Consider the following 424-residue polypeptide: Chloroquine resistance transporter (424 aa).

The Cytoplasmic portion of the chain corresponds to methionine 1 to lysine 49. An intramembrane segment occupies leucine 50–asparagine 58. A helical transmembrane segment spans residues isoleucine 59–leucine 83. Residues asparagine 84–tyrosine 89 lie on the Vacuolar side of the membrane. A helical membrane pass occupies residues serine 90–leucine 111. At phenylalanine 112–phenylalanine 126 the chain is on the cytoplasmic side. A helical membrane pass occupies residues asparagine 127–glycine 147. The Vacuolar segment spans residues leucine 148–threonine 152. The helical transmembrane segment at glycine 153 to leucine 173 threads the bilayer. The Cytoplasmic portion of the chain corresponds to isoleucine 174 to histidine 180. The helical transmembrane segment at leucine 181–serine 202 threads the bilayer. At phenylalanine 203 to serine 210 the chain is on the vacuolar side. Residues isoleucine 211–lysine 236 traverse the membrane as a helical segment. The Cytoplasmic portion of the chain corresponds to lysine 237 to aspartate 241. A helical membrane pass occupies residues isoleucine 242–valine 263. Residues tyrosine 264–isoleucine 279 lie on the Vacuolar side of the membrane. Residues tryptophan 280–leucine 292 lie within the membrane without spanning it. Intrachain disulfides connect cysteine 289/cysteine 312 and cysteine 301/cysteine 309. The Vacuolar portion of the chain corresponds to glycine 293–glycine 314. A helical transmembrane segment spans residues alanine 315–lysine 339. Topologically, residues phenylalanine 340–methionine 343 are cytoplasmic. Residues threonine 344–tyrosine 361 traverse the membrane as a helical segment. Residues phenylalanine 362–arginine 374 are Vacuolar-facing. A helical membrane pass occupies residues leucine 375–isoleucine 397. Topologically, residues leucine 398–glutamine 424 are cytoplasmic.

Belongs to the CRT-like transporter family. Monomer.

The protein resides in the membrane. It localises to the vacuole membrane. The enzyme catalyses L-arginine(in) = L-arginine(out). It catalyses the reaction L-lysine(in) = L-lysine(out). The catalysed reaction is L-histidine(out) = L-histidine(in). It carries out the reaction Fe(3+)(in) = Fe(3+)(out). The enzyme catalyses Fe(2+)(in) = Fe(2+)(out). Its function is as follows. Nutrient transporter. Substrate transport is pH-dependent. Can transport arginine, lysine, histidine and peptides. Involved in maintaining the osmotic homeostasis of the digestive vacuole. Required for the normal asexual intraerythrocytic proliferation of parasites. Can transport Fe(2+) and Fe(3+). The sequence is that of Chloroquine resistance transporter from Plasmodium falciparum (isolate 7G8).